We begin with the raw amino-acid sequence, 615 residues long: Protein DlpA (615 aa).

The protein belongs to the isocitrate and isopropylmalate dehydrogenases family. To M.jannaschii MJ0644 in the C-terminal section.

The protein is Protein DlpA (dlpA) of Legionella pneumophila subsp. pneumophila (strain Philadelphia 1 / ATCC 33152 / DSM 7513).